Here is a 495-residue protein sequence, read N- to C-terminus: Cytochrome P450 710A1 (495 aa).

A helical membrane pass occupies residues 5–25 (VSIFASLAPYLISAFLLFLLV). Cys-434 lines the heme pocket.

Belongs to the cytochrome P450 family. It depends on heme as a cofactor. In terms of tissue distribution, expressed in the vascular tissues of roots, shoots and leaves. Expressed in root tips and sepals. Very low expression in stems and siliques.

The protein localises to the membrane. The enzyme catalyses 5-dehydroepisterol + NADPH + O2 + H(+) = ergosta-5,7,22,24(28)-tetraen-3beta-ol + NADP(+) + 2 H2O. It functions in the pathway steroid biosynthesis; sterol biosynthesis. In terms of biological role, required to form the C-22 double bond in the sterol side chain. Possesses in vitro C-22 desaturase activity toward beta-sitosterol and produces stigmasterol. No activity with campesterol. This Arabidopsis thaliana (Mouse-ear cress) protein is Cytochrome P450 710A1.